The chain runs to 207 residues: Putative acetyltransferase C18B11.09c (207 aa).

This sequence belongs to the transferase hexapeptide repeat family.

This Schizosaccharomyces pombe (strain 972 / ATCC 24843) (Fission yeast) protein is Putative acetyltransferase C18B11.09c.